Reading from the N-terminus, the 307-residue chain is Homoserine O-acetyltransferase (307 aa).

The Acyl-thioester intermediate role is filled by Cys-142. Substrate is bound by residues Lys-163 and Ser-192. His-235 serves as the catalytic Proton acceptor. Glu-237 is a catalytic residue. Arg-249 lines the substrate pocket.

Belongs to the MetA family.

It is found in the cytoplasm. The enzyme catalyses L-homoserine + acetyl-CoA = O-acetyl-L-homoserine + CoA. It functions in the pathway amino-acid biosynthesis; L-methionine biosynthesis via de novo pathway; O-acetyl-L-homoserine from L-homoserine: step 1/1. Its function is as follows. Transfers an acetyl group from acetyl-CoA to L-homoserine, forming acetyl-L-homoserine. In Desulfitobacterium hafniense (strain Y51), this protein is Homoserine O-acetyltransferase.